The sequence spans 220 residues: Protein CREG1 (220 aa).

An N-terminal signal peptide occupies residues 1-31 (MAGLSRGSARALLAALLASTLLALLVSPARG). N-linked (GlcNAc...) asparagine glycosylation is found at asparagine 160, asparagine 193, and asparagine 216.

This sequence belongs to the CREG family. As to quaternary structure, homodimer. Interacts with IGF2R; the interaction is dependent on glycosylation. Post-translationally, N-glycosylated.

It localises to the secreted. Functionally, may contribute to the transcriptional control of cell growth and differentiation. Antagonizes transcriptional activation and cellular transformation by the adenovirus E1A protein. The transcriptional control activity of cell growth requires interaction with IGF2R. In Homo sapiens (Human), this protein is Protein CREG1 (CREG1).